Here is a 513-residue protein sequence, read N- to C-terminus: 2-isopropylmalate synthase (513 aa).

Positions 4–268 constitute a Pyruvate carboxyltransferase domain; the sequence is IKIFDTTLRD…ETGIRTELIY (265 aa). The Mn(2+) site is built by aspartate 13, histidine 203, histidine 205, and asparagine 239. The tract at residues 392–513 is regulatory domain; sequence RLVHFHVHTG…GLLRKNGGVE (122 aa).

It belongs to the alpha-IPM synthase/homocitrate synthase family. LeuA type 1 subfamily. As to quaternary structure, homodimer. Requires Mn(2+) as cofactor.

The protein localises to the cytoplasm. It carries out the reaction 3-methyl-2-oxobutanoate + acetyl-CoA + H2O = (2S)-2-isopropylmalate + CoA + H(+). The protein operates within amino-acid biosynthesis; L-leucine biosynthesis; L-leucine from 3-methyl-2-oxobutanoate: step 1/4. In terms of biological role, catalyzes the condensation of the acetyl group of acetyl-CoA with 3-methyl-2-oxobutanoate (2-ketoisovalerate) to form 3-carboxy-3-hydroxy-4-methylpentanoate (2-isopropylmalate). The chain is 2-isopropylmalate synthase from Thermotoga neapolitana (strain ATCC 49049 / DSM 4359 / NBRC 107923 / NS-E).